Here is a 130-residue protein sequence, read N- to C-terminus: Small ribosomal subunit protein uS8 (130 aa).

Belongs to the universal ribosomal protein uS8 family. As to quaternary structure, part of the 30S ribosomal subunit.

One of the primary rRNA binding proteins, it binds directly to 16S rRNA central domain where it helps coordinate assembly of the platform of the 30S subunit. This is Small ribosomal subunit protein uS8 from Methanobrevibacter smithii (strain ATCC 35061 / DSM 861 / OCM 144 / PS).